Consider the following 237-residue polypeptide: MVIIWILLLSFISCGPQVSWAKRLEREPKYPCSRGGKLCDPRQRRDAGGRGGVYEHLGGAPRNRKLYCATKYHLQIHLNGKINGTLEKNSVFSILEITAVDVGIVAIKGLFSGRYLAMNQRGRLYASETYNPECEFVERIHELGYNTYASRLYRTVPSGAGTKRKASAERLWYVSINGKGRPRRGFKTRRTQKSSLFLPRVLDNKDHDAVRLFHTNAVYRESILKPSKPSGRQRRGQ.

The signal sequence occupies residues 1 to 21; sequence MVIIWILLLSFISCGPQVSWA. An N-linked (GlcNAc...) asparagine glycan is attached at Asn83.

This sequence belongs to the heparin-binding growth factors family.

Its function is as follows. Plays an important role in the regulation of embryonic development, cell proliferation, and cell differentiation. This Xenopus laevis (African clawed frog) protein is Fibroblast growth factor 3 (fgf3).